A 330-amino-acid polypeptide reads, in one-letter code: Type II methyltransferase M.MthTI (330 aa).

The region spanning 3-328 is the SAM-dependent MTase C5-type domain; that stretch reads MDIASFFSGA…KKIKKDLEGV (326 aa). The active site involves Cys73.

It belongs to the class I-like SAM-binding methyltransferase superfamily. C5-methyltransferase family.

The catalysed reaction is a 2'-deoxycytidine in DNA + S-adenosyl-L-methionine = a 5-methyl-2'-deoxycytidine in DNA + S-adenosyl-L-homocysteine + H(+). Its function is as follows. A methylase that recognizes the double-stranded sequence 5'-GGCC-3', methylates C-3 on both strands, and protects the DNA from cleavage by the MthTI endonuclease. The chain is Type II methyltransferase M.MthTI (mthTIM) from Methanothermobacter thermautotrophicus (Methanobacterium thermoformicicum).